The primary structure comprises 211 residues: Dual specificity protein phosphatase 26 (211 aa).

Residues N60 to Q207 enclose the Tyrosine-protein phosphatase domain. Residue C152 is the Phosphocysteine intermediate of the active site.

It belongs to the protein-tyrosine phosphatase family. Non-receptor class dual specificity subfamily. Interacts with HSF4.

The protein localises to the cytoplasm. It localises to the nucleus. The protein resides in the golgi apparatus. It catalyses the reaction O-phospho-L-tyrosyl-[protein] + H2O = L-tyrosyl-[protein] + phosphate. It carries out the reaction O-phospho-L-seryl-[protein] + H2O = L-seryl-[protein] + phosphate. The catalysed reaction is O-phospho-L-threonyl-[protein] + H2O = L-threonyl-[protein] + phosphate. Inactivates MAPK1 and MAPK3 which leads to dephosphorylation of heat shock factor protein 4 and a reduction in its DNA-binding activity. The sequence is that of Dual specificity protein phosphatase 26 (Dusp26) from Rattus norvegicus (Rat).